A 194-amino-acid polypeptide reads, in one-letter code: MRIGEISRKTYETDIEVKIDLDGRGKYNIDTGIGFFNHMLCMIAKHGIMDMDVYAKGDLDVDFHHTVEDVGICIGKSIKKALGNKKSIKRYGTFFIPMDESLSMCSVDLSGRPFLVFQGELKNSKVGEMDTELIEEFFRALAFNAEMTLHIKVFYGKNTHHIIESVFKSFAHALREAVSIDEKIEGTMSTKGMI.

This sequence belongs to the imidazoleglycerol-phosphate dehydratase family.

It localises to the cytoplasm. The catalysed reaction is D-erythro-1-(imidazol-4-yl)glycerol 3-phosphate = 3-(imidazol-4-yl)-2-oxopropyl phosphate + H2O. It participates in amino-acid biosynthesis; L-histidine biosynthesis; L-histidine from 5-phospho-alpha-D-ribose 1-diphosphate: step 6/9. In Clostridium kluyveri (strain NBRC 12016), this protein is Imidazoleglycerol-phosphate dehydratase.